The following is a 228-amino-acid chain: ATP-dependent dethiobiotin synthetase BioD (228 aa).

12-17 lines the ATP pocket; it reads DVGKTY. Mg(2+) is bound at residue Thr-16. Residue Lys-37 is part of the active site. Residues Asp-53, 114–117, 174–175, 203–205, and Asn-210 contribute to the ATP site; these read EGMG, ND, and PFI. Residues Asp-53 and Glu-114 each coordinate Mg(2+).

It belongs to the dethiobiotin synthetase family. In terms of assembly, homodimer. Mg(2+) is required as a cofactor.

The protein localises to the cytoplasm. The catalysed reaction is (7R,8S)-7,8-diammoniononanoate + CO2 + ATP = (4R,5S)-dethiobiotin + ADP + phosphate + 3 H(+). The protein operates within cofactor biosynthesis; biotin biosynthesis; biotin from 7,8-diaminononanoate: step 1/2. In terms of biological role, catalyzes a mechanistically unusual reaction, the ATP-dependent insertion of CO2 between the N7 and N8 nitrogen atoms of 7,8-diaminopelargonic acid (DAPA, also called 7,8-diammoniononanoate) to form a ureido ring. This is ATP-dependent dethiobiotin synthetase BioD from Nitrosopumilus maritimus (strain SCM1).